Reading from the N-terminus, the 360-residue chain is MSALFSLVAVYVLVCALHKQIKKYASVCYLGSACVSVAVVCVVWSGATKGNFGVRVLLHPLTSASFSTAIFTFVMCASVLKNGLLKQRVMGLRAELAITAAILTLGHNIAHGRDYLVRLCGSTGDLSTGFLVAGAVSMVLVLLMSILAVTSFKVVRRRMGAKTWKRVQRLAYLFYGLTYVHLSFILLPTALRGYIPSVVSYVLYTVIFATYALLRVRKALGKRKGACALCSAAVAVSFVAFVLGASHMVRHTRRAHTERTTRAKARKCSPAEMKDGVYEASAQGHNGKLSLRVTISQGRIEAVTVVGHSDDDPYASWAVEGVSAAIVGAQSTDVDVVSEATSTSEAIIRAVEKILQQPQP.

Helical transmembrane passes span 26 to 48, 58 to 80, 89 to 111, 126 to 148, 169 to 191, 195 to 214, and 227 to 249; these read SVCY…SGAT, LHPL…ASVL, VMGL…NIAH, LSTG…SILA, RLAY…PTAL, IPSV…YALL, and CALC…SHMV.

The protein resides in the cell membrane. This is an uncharacterized protein from Treponema pallidum (strain Nichols).